We begin with the raw amino-acid sequence, 180 residues long: MAGGAVPNLKEKMQVPKDEDLLLGSFRDNQECSVAAEMKEHMSRLLGASQRRQRVDPKAVGSAVVWNTAANQSKKMGPQLRGVGVVGEQGDGGAQPQENPGGSQGMRSQFERRELNTLAEIGLEELNELEMEIMRRQLFMITERLRYLEDQSATWHQREVLLFTMLLSSCITNLWLWMRQ.

The tract at residues 77-108 (GPQLRGVGVVGEQGDGGAQPQENPGGSQGMRS) is disordered. Over residues 84 to 93 (GVVGEQGDGG) the composition is skewed to gly residues. The span at 96-107 (PQENPGGSQGMR) shows a compositional bias: polar residues. Residues 160-178 (VLLFTMLLSSCITNLWLWM) traverse the membrane as a helical segment.

As to quaternary structure, interacts with BIK and RNF183. Interacts with IMMT/MIC60and EMD.

It localises to the mitochondrion. The protein resides in the mitochondrion outer membrane. It is found in the endoplasmic reticulum membrane. In terms of biological role, involved in the regulation of endoplasmic reticulum (ER)-mitochondria coupling. Negatively regulates the ER-mitochondria distance and Ca(2+) transfer from ER to mitochondria possibly implicating it in the regulation of apoptosis. May collaborate with RNF183 to restrain BIK protein levels thus regulating apoptotic signaling. The chain is Fetal and adult testis-expressed transcript protein homolog (FATE1) from Bos taurus (Bovine).